Reading from the N-terminus, the 118-residue chain is Large ribosomal subunit protein bL20 (118 aa).

Belongs to the bacterial ribosomal protein bL20 family.

Functionally, binds directly to 23S ribosomal RNA and is necessary for the in vitro assembly process of the 50S ribosomal subunit. It is not involved in the protein synthesizing functions of that subunit. The chain is Large ribosomal subunit protein bL20 from Francisella tularensis subsp. tularensis (strain FSC 198).